The chain runs to 536 residues: Phosphoenolpyruvate carboxykinase (ATP) (536 aa).

Residues Arg61, Tyr195, and Lys201 each contribute to the substrate site. Residues Lys201, His220, and 236–244 (GLSGTGKTT) each bind ATP. Mn(2+) contacts are provided by Lys201 and His220. Residue Asp257 coordinates Mn(2+). ATP-binding residues include Glu285, Arg322, and Thr447. Residue Arg322 participates in substrate binding.

It belongs to the phosphoenolpyruvate carboxykinase (ATP) family. Requires Mn(2+) as cofactor.

Its subcellular location is the cytoplasm. The catalysed reaction is oxaloacetate + ATP = phosphoenolpyruvate + ADP + CO2. Its pathway is carbohydrate biosynthesis; gluconeogenesis. Functionally, involved in the gluconeogenesis. Catalyzes the conversion of oxaloacetate (OAA) to phosphoenolpyruvate (PEP) through direct phosphoryl transfer between the nucleoside triphosphate and OAA. In Rhizobium rhizogenes (strain K84 / ATCC BAA-868) (Agrobacterium radiobacter), this protein is Phosphoenolpyruvate carboxykinase (ATP).